Here is a 277-residue protein sequence, read N- to C-terminus: S-formylglutathione hydrolase FrmB (277 aa).

Residues serine 145, aspartate 221, and histidine 254 each act as charge relay system in the active site.

The protein belongs to the esterase D family.

The catalysed reaction is S-formylglutathione + H2O = formate + glutathione + H(+). Functionally, serine hydrolase involved in the detoxification of formaldehyde. Hydrolyzes S-formylglutathione to glutathione and formate. The sequence is that of S-formylglutathione hydrolase FrmB (frmB) from Escherichia coli (strain ATCC 8739 / DSM 1576 / NBRC 3972 / NCIMB 8545 / WDCM 00012 / Crooks).